A 27-amino-acid polypeptide reads, in one-letter code: Trichocyst matrix protein T4-C (27 aa).

This sequence belongs to the TMP family.

It is found in the trichocyst. Functionally, structural protein that crystallize inside the trichocyst matrix. This chain is Trichocyst matrix protein T4-C (T4C), found in Paramecium tetraurelia.